The following is a 222-amino-acid chain: Ribonuclease HII (222 aa).

The RNase H type-2 domain occupies aspartate 17 to serine 206. A divalent metal cation contacts are provided by aspartate 23, glutamate 24, and aspartate 115.

It belongs to the RNase HII family. Mn(2+) serves as cofactor. The cofactor is Mg(2+).

The protein resides in the cytoplasm. The catalysed reaction is Endonucleolytic cleavage to 5'-phosphomonoester.. Endonuclease that specifically degrades the RNA of RNA-DNA hybrids. This chain is Ribonuclease HII, found in Pseudomonas savastanoi pv. phaseolicola (strain 1448A / Race 6) (Pseudomonas syringae pv. phaseolicola (strain 1448A / Race 6)).